The sequence spans 155 residues: Protein-export protein SecB (155 aa).

This sequence belongs to the SecB family. Homotetramer, a dimer of dimers. One homotetramer interacts with 1 SecA dimer.

The protein resides in the cytoplasm. In terms of biological role, one of the proteins required for the normal export of preproteins out of the cell cytoplasm. It is a molecular chaperone that binds to a subset of precursor proteins, maintaining them in a translocation-competent state. It also specifically binds to its receptor SecA. This is Protein-export protein SecB from Vibrio atlanticus (strain LGP32) (Vibrio splendidus (strain Mel32)).